Reading from the N-terminus, the 245-residue chain is tRNA pseudouridine synthase A (245 aa).

The active-site Nucleophile is the D52. Residue Y111 coordinates substrate.

This sequence belongs to the tRNA pseudouridine synthase TruA family. In terms of assembly, homodimer.

It catalyses the reaction uridine(38/39/40) in tRNA = pseudouridine(38/39/40) in tRNA. Formation of pseudouridine at positions 38, 39 and 40 in the anticodon stem and loop of transfer RNAs. The sequence is that of tRNA pseudouridine synthase A from Rhodopseudomonas palustris (strain BisB18).